Here is a 254-residue protein sequence, read N- to C-terminus: Ribosomal RNA large subunit methyltransferase E (254 aa).

The segment covering 1–18 has biased composition (gly residues); the sequence is MTNSGKTGGKSGKGGTGG. The disordered stretch occupies residues 1–26; sequence MTNSGKTGGKSGKGGTGGARALKVRV. S-adenosyl-L-methionine-binding residues include Gly-89, Trp-91, Asp-119, Asp-135, and Asp-159. Lys-199 acts as the Proton acceptor in catalysis.

The protein belongs to the class I-like SAM-binding methyltransferase superfamily. RNA methyltransferase RlmE family.

The protein localises to the cytoplasm. It carries out the reaction uridine(2552) in 23S rRNA + S-adenosyl-L-methionine = 2'-O-methyluridine(2552) in 23S rRNA + S-adenosyl-L-homocysteine + H(+). In terms of biological role, specifically methylates the uridine in position 2552 of 23S rRNA at the 2'-O position of the ribose in the fully assembled 50S ribosomal subunit. The protein is Ribosomal RNA large subunit methyltransferase E of Parvibaculum lavamentivorans (strain DS-1 / DSM 13023 / NCIMB 13966).